The following is a 1341-amino-acid chain: DNA-directed RNA polymerase subunit beta (1341 aa).

Belongs to the RNA polymerase beta chain family. As to quaternary structure, the RNAP catalytic core consists of 2 alpha, 1 beta, 1 beta' and 1 omega subunit. When a sigma factor is associated with the core the holoenzyme is formed, which can initiate transcription.

The enzyme catalyses RNA(n) + a ribonucleoside 5'-triphosphate = RNA(n+1) + diphosphate. Functionally, DNA-dependent RNA polymerase catalyzes the transcription of DNA into RNA using the four ribonucleoside triphosphates as substrates. The polypeptide is DNA-directed RNA polymerase subunit beta (Photobacterium profundum (strain SS9)).